Here is a 158-residue protein sequence, read N- to C-terminus: Transcription elongation factor GreA (158 aa).

Belongs to the GreA/GreB family.

Functionally, necessary for efficient RNA polymerase transcription elongation past template-encoded arresting sites. The arresting sites in DNA have the property of trapping a certain fraction of elongating RNA polymerases that pass through, resulting in locked ternary complexes. Cleavage of the nascent transcript by cleavage factors such as GreA or GreB allows the resumption of elongation from the new 3'terminus. GreA releases sequences of 2 to 3 nucleotides. The chain is Transcription elongation factor GreA from Psychrobacter sp. (strain PRwf-1).